We begin with the raw amino-acid sequence, 60 residues long: Cytotoxin 7 (60 aa).

4 cysteine pairs are disulfide-bonded: Cys-3/Cys-21, Cys-14/Cys-38, Cys-42/Cys-53, and Cys-54/Cys-59.

The protein belongs to the three-finger toxin family. Short-chain subfamily. Type IA cytotoxin sub-subfamily. Monomer in solution; Homodimer and oligomer in the presence of negatively charged lipids forming a pore with a size ranging between 20 and 30 Angstroms. Expressed by the venom gland.

The protein localises to the secreted. The protein resides in the target cell membrane. In terms of biological role, shows cytolytic activity on many different cells by forming pore in lipid membranes. In vivo, increases heart rate or kills the animal by cardiac arrest. In addition, it binds to heparin with high affinity, interacts with Kv channel-interacting protein 1 (KCNIP1) in a calcium-independent manner, and binds to integrin alpha-V/beta-3 (ITGAV/ITGB3) with moderate affinity. Preferentially binds acidic phospholipids like phosphatidylserine, phosphatidic acid and phosphatidyl glycerol. Has hemolytic activity towards human erythrocytes (EC(50)=0.171 uM) and cytolytic activity towards various cell lines. This chain is Cytotoxin 7, found in Naja naja (Indian cobra).